A 232-amino-acid chain; its full sequence is Glutathione S-transferase U10 (232 aa).

Residues 6 to 85 enclose the GST N-terminal domain; it reads SKVILHGTWI…YIDETWTNSP (80 aa). Glutathione is bound by residues 16–17, 42–43, 56–57, and 69–70; these read ST, NK, KI, and ES. The 136-residue stretch at 91-226 folds into the GST C-terminal domain; sequence DPYERAQVRF…FIQKYRQKCL (136 aa).

Belongs to the GST superfamily. Tau family.

The protein resides in the cytoplasm. It is found in the cytosol. The enzyme catalyses RX + glutathione = an S-substituted glutathione + a halide anion + H(+). May be involved in the conjugation of reduced glutathione to a wide number of exogenous and endogenous hydrophobic electrophiles and have a detoxification role against certain herbicides. The protein is Glutathione S-transferase U10 (GSTU10) of Arabidopsis thaliana (Mouse-ear cress).